Reading from the N-terminus, the 182-residue chain is UPF0149 protein HI_0817 (182 aa).

It belongs to the UPF0149 family.

The protein is UPF0149 protein HI_0817 of Haemophilus influenzae (strain ATCC 51907 / DSM 11121 / KW20 / Rd).